A 250-amino-acid chain; its full sequence is Triosephosphate isomerase (250 aa).

Residue 9 to 11 (NWK) coordinates substrate. H95 functions as the Electrophile in the catalytic mechanism. E167 acts as the Proton acceptor in catalysis. Substrate is bound by residues G173, S213, and 234–235 (GG).

This sequence belongs to the triosephosphate isomerase family. As to quaternary structure, homodimer.

It is found in the cytoplasm. It carries out the reaction D-glyceraldehyde 3-phosphate = dihydroxyacetone phosphate. Its pathway is carbohydrate biosynthesis; gluconeogenesis. The protein operates within carbohydrate degradation; glycolysis; D-glyceraldehyde 3-phosphate from glycerone phosphate: step 1/1. Involved in the gluconeogenesis. Catalyzes stereospecifically the conversion of dihydroxyacetone phosphate (DHAP) to D-glyceraldehyde-3-phosphate (G3P). This is Triosephosphate isomerase from Flavobacterium johnsoniae (strain ATCC 17061 / DSM 2064 / JCM 8514 / BCRC 14874 / CCUG 350202 / NBRC 14942 / NCIMB 11054 / UW101) (Cytophaga johnsonae).